We begin with the raw amino-acid sequence, 309 residues long: Porphobilinogen deaminase (309 aa).

Position 241 is an S-(dipyrrolylmethanemethyl)cysteine (cysteine 241).

The protein belongs to the HMBS family. Monomer. Requires dipyrromethane as cofactor.

It carries out the reaction 4 porphobilinogen + H2O = hydroxymethylbilane + 4 NH4(+). It functions in the pathway porphyrin-containing compound metabolism; protoporphyrin-IX biosynthesis; coproporphyrinogen-III from 5-aminolevulinate: step 2/4. Functionally, tetrapolymerization of the monopyrrole PBG into the hydroxymethylbilane pre-uroporphyrinogen in several discrete steps. The chain is Porphobilinogen deaminase from Bacillus anthracis (strain A0248).